The following is a 437-amino-acid chain: U1 small nuclear ribonucleoprotein 70 kDa (437 aa).

Threonine 2 carries the N-acetylthreonine modification. Residues 48 to 79 (FEDPRDAPPPTRAETREERMERKRREKIERRQ) form a disordered region. The span at 60–79 (AETREERMERKRREKIERRQ) shows a compositional bias: basic and acidic residues. The required for interaction with U1 RNA stretch occupies residues 92–202 (HNDPNAQGDA…GGGLGGTRRG (111 aa)). The RRM domain occupies 103-181 (KTLFVARVNY…RRVLVDVERG (79 aa)). N6-acetyllysine is present on lysine 118. The residue at position 126 (tyrosine 126) is a Phosphotyrosine. The tract at residues 187 to 437 (WRPRRLGGGL…NGYLMEAAPE (251 aa)) is disordered. A compositionally biased stretch (gly residues) spans 192–201 (LGGGLGGTRR). A compositionally biased stretch (basic and acidic residues) spans 207–254 (NIRHSGRDDTSRYDERPGPSPLPHRDRDRDRERERRERSRERDKERER). Phosphoserine is present on residues serine 226 and serine 268. Residues 255-268 (RRSRSRDRRRRSRS) show a composition bias toward basic residues. 2 stretches are compositionally biased toward basic and acidic residues: residues 269-286 (RDKE…DKDR) and 294-310 (RSRE…EELR). Serine 320 is modified (phosphoserine). Positions 343–393 (PEEKGRDRDRERRRSHRSERERRRDRDRDRDRDREHKRGERGSERGRDEAR) are enriched in basic and acidic residues. Lysine 346 participates in a covalent cross-link: Glycyl lysine isopeptide (Lys-Gly) (interchain with G-Cter in SUMO2). Serine 410 is modified (phosphoserine).

Component of the U1 snRNP. The U1 snRNP is composed of the U1 snRNA and the 7 core Sm proteins SNRPB, SNRPD1, SNRPD2, SNRPD3, SNRPE, SNRPF and SNRPG that assemble in a heptameric protein ring on the Sm site of the small nuclear RNA to form the core snRNP, and at least three U1 snRNP-specific proteins SNRNP70/U1-70K, SNRPA/U1-A and SNRPC/U1-C. Interacts with SCNM1. Found in a pre-mRNA splicing complex with SFRS4, SFRS5, SNRNP70, SNRPA1, SRRM1 and SRRM2. Found in a pre-mRNA exonic splicing enhancer (ESE) complex with SNRNP70, SNRPA1, SRRM1 and TRA2B/SFRS10. Interacts with dephosphorylated SFRS13A and SFPQ. Interacts with NUDT21/CPSF5, CPSF6, SCAF11, and ZRANB2. Interacts with GEMIN5. Interacts with FUS. In terms of processing, the N-terminus is blocked. Post-translationally, extensively phosphorylated on serine residues in the C-terminal region.

The protein localises to the nucleus speckle. Its subcellular location is the nucleus. It localises to the nucleoplasm. Component of the spliceosomal U1 snRNP, which is essential for recognition of the pre-mRNA 5' splice-site and the subsequent assembly of the spliceosome. SNRNP70 binds to the loop I region of U1-snRNA. In terms of biological role, truncated isoforms that lack the RRM domain cannot bind U1-snRNA. This is U1 small nuclear ribonucleoprotein 70 kDa (SNRNP70) from Homo sapiens (Human).